The following is a 1173-amino-acid chain: Thrombospondin-1 (1173 aa).

The N-terminal stretch at 1–18 (MKGIFLLLMLVMPQTHQA) is a signal peptide. Positions 22–224 (GNDDNSVFDL…LQNVRFVFGT (203 aa)) constitute a Laminin G-like domain. Positions 50–98 (HLVKGPDPSSPAYRIEDADLIPPLPEDKFQDLLDAIRADRGFILLATLR) are heparin-binding. N-linked (GlcNAc...) asparagine glycans are attached at residues asparagine 155 and asparagine 158. Cysteine 174 and cysteine 235 are disulfide-bonded. Asparagine 250 and asparagine 363 each carry an N-linked (GlcNAc...) asparagine glycan. Positions 319 to 376 (GVCLHNGVLHKNRDEWTVDSCTECTCQNSATICRKVSCPLMPCTNATIPDGECCPRCW) constitute a VWFC domain. TSP type-1 domains lie at 382 to 432 (DDDW…QDCD), 438 to 493 (DGGW…DPCP), and 495 to 550 (NGQW…QDCP). Intrachain disulfides connect cysteine 394–cysteine 426, cysteine 398–cysteine 431, cysteine 409–cysteine 416, cysteine 450–cysteine 487, cysteine 454–cysteine 492, cysteine 465–cysteine 477, cysteine 507–cysteine 544, cysteine 511–cysteine 549, cysteine 522–cysteine 534, cysteine 554–cysteine 565, cysteine 559–cysteine 575, cysteine 578–cysteine 589, cysteine 595–cysteine 611, cysteine 602–cysteine 620, cysteine 623–cysteine 647, cysteine 653–cysteine 666, cysteine 660–cysteine 679, and cysteine 681–cysteine 692. Residues 550–590 (PIDGCLSNPCFAGVKCTSFIDGSWKCGSCPPGYRGNGITCK) enclose the EGF-like 1 domain. An EGF-like 2 domain is found at 649–693 (PRNPCADGTHDCHKNARCIYLGHYSDPMFRCECRPGYAGNGIICG). TSP type-3 repeat units follow at residues 694-729 (EDTD…NSGQ), 730-765 (EDYD…NPAQ), 766-788 (YDYD…NPDQ), 789-824 (ADTD…NVDQ), 825-847 (KDTD…NPEQ), 848-885 (TDSD…NANQ), 886-921 (ADHD…NPDQ), and 922-957 (TDTN…EIST). Residues asparagine 705 and asparagine 711 are each glycosylated (N-linked (GlcNAc...) asparagine). Cystine bridges form between cysteine 708-cysteine 716, cysteine 721-cysteine 741, cysteine 757-cysteine 777, cysteine 780-cysteine 800, cysteine 816-cysteine 836, cysteine 839-cysteine 859, cysteine 877-cysteine 897, cysteine 913-cysteine 933, and cysteine 949-cysteine 1170. Residues 838 to 935 (NCPLEHNPEQ…GDGRGDACQY (98 aa)) are disordered. Over residues 886–897 (ADHDKDGKGDAC) the composition is skewed to basic and acidic residues. The Cell attachment site motif lies at 929–931 (RGD). The 213-residue stretch at 961–1173 (RKFQMVPLDP…SDLKYECRDS (213 aa)) folds into the TSP C-terminal domain. Residue asparagine 1070 is glycosylated (N-linked (GlcNAc...) asparagine).

The protein belongs to the thrombospondin family. In terms of assembly, homotrimer; disulfide-linked.

The protein localises to the secreted. It localises to the cell surface. It is found in the extracellular space. Its subcellular location is the extracellular matrix. The protein resides in the endoplasmic reticulum. The protein localises to the sarcoplasmic reticulum. In terms of biological role, adhesive glycoprotein that mediates cell-to-cell and cell-to-matrix interactions. Can bind to fibrinogen, fibronectin, laminin, type V collagen and integrins alpha-V/beta-1, alpha-V/beta-3 and alpha-IIb/beta-3. May play a role in ER stress response. The chain is Thrombospondin-1 (thbs1) from Xenopus laevis (African clawed frog).